We begin with the raw amino-acid sequence, 468 residues long: Inositol polyphosphate 5-phosphatase K (468 aa).

The catalytic stretch occupies residues 34 to 337 (VHVVTWNVAS…SDHKPVTGTF (304 aa)). A required for interaction with GPR78 and PAK1 region spans residues 318–448 (NYVSHMAYSI…HSVVGISQPF (131 aa)). A required for ruffle localization region spans residues 340–468 (ELNPLMSVPL…DTLYEPEPQI (129 aa)).

It belongs to the inositol 1,4,5-trisphosphate 5-phosphatase type II family. In terms of assembly, interacts with GPR78; necessary for INPP5K localization at the endoplasmic reticulum. Interacts with PAK1; competes with GPR78. Expressed in the skeletal muscle and the eye.

It localises to the endoplasmic reticulum. The protein localises to the cytoplasm. It catalyses the reaction 1D-myo-inositol 1,4,5-trisphosphate + H2O = 1D-myo-inositol 1,4-bisphosphate + phosphate. It carries out the reaction 1,2-dioctanoyl-sn-glycero-3-phospho-(1D-myo-inositol-3,4,5-trisphosphate) + H2O = 1,2-dioctanoyl-sn-glycero-3-phospho-(1D-myo-inositol-3,4-bisphosphate) + phosphate. The catalysed reaction is 1D-myo-inositol 1,3,4,5-tetrakisphosphate + H2O = 1D-myo-inositol 1,3,4-trisphosphate + phosphate. The enzyme catalyses a 1,2-diacyl-sn-glycero-3-phospho-(1D-myo-inositol-4,5-bisphosphate) + H2O = a 1,2-diacyl-sn-glycero-3-phospho-(1D-myo-inositol 4-phosphate) + phosphate. It catalyses the reaction a 1,2-diacyl-sn-glycero-3-phospho-(1D-myo-inositol-3,4,5-trisphosphate) + H2O = a 1,2-diacyl-sn-glycero-3-phospho-(1D-myo-inositol-3,4-bisphosphate) + phosphate. In terms of biological role, inositol 5-phosphatase which acts on inositol 1,4,5-trisphosphate, inositol 1,3,4,5-tetrakisphosphate, phosphatidylinositol 4,5-bisphosphate and phosphatidylinositol 3,4,5-trisphosphate. Has 6-fold higher affinity for phosphatidylinositol 4,5-bisphosphate than for inositol 1,4,5-trisphosphate. Negatively regulates assembly of the actin cytoskeleton. Controls insulin-dependent glucose uptake among inositol 3,4,5-trisphosphate phosphatases; therefore, is the specific regulator for insulin signaling in skeletal muscle. In Mus musculus (Mouse), this protein is Inositol polyphosphate 5-phosphatase K.